Here is a 429-residue protein sequence, read N- to C-terminus: Phosphoribosylamine--glycine ligase (429 aa).

Residues 108 to 315 enclose the ATP-grasp domain; sequence KDFLARHRIP…LVLLVEAALA (208 aa). 134–195 contributes to the ATP binding site; it reads LHEQGAPIVI…EEFLDGEEAS (62 aa). 2 residues coordinate Mg(2+): Glu285 and Asn287.

The protein belongs to the GARS family. The cofactor is Mg(2+). Mn(2+) is required as a cofactor.

The catalysed reaction is 5-phospho-beta-D-ribosylamine + glycine + ATP = N(1)-(5-phospho-beta-D-ribosyl)glycinamide + ADP + phosphate + H(+). Its pathway is purine metabolism; IMP biosynthesis via de novo pathway; N(1)-(5-phospho-D-ribosyl)glycinamide from 5-phospho-alpha-D-ribose 1-diphosphate: step 2/2. In Pseudomonas aeruginosa (strain ATCC 15692 / DSM 22644 / CIP 104116 / JCM 14847 / LMG 12228 / 1C / PRS 101 / PAO1), this protein is Phosphoribosylamine--glycine ligase.